Reading from the N-terminus, the 107-residue chain is Anti-adapter protein IraM (107 aa).

This sequence belongs to the IraM/RssC family.

Its subcellular location is the cytoplasm. Inhibits RpoS proteolysis by regulating RssB activity, thereby increasing the stability of the sigma stress factor RpoS during magnesium starvation. This chain is Anti-adapter protein IraM, found in Escherichia coli O17:K52:H18 (strain UMN026 / ExPEC).